We begin with the raw amino-acid sequence, 248 residues long: Granzyme-like protein 2 (248 aa).

The N-terminal stretch at 1–18 is a signal peptide; that stretch reads MFLFLIFLVAVLPVNTEG. The propeptide at 19–20 is activation peptide; it reads GE. A Peptidase S1 domain is found at 21–243; it reads IVWGTESKPH…FIPWIQKTMK (223 aa). Cys-50 and Cys-66 are joined by a disulfide. Catalysis depends on charge relay system residues His-65 and Asp-108. 2 disulfide bridges follow: Cys-142–Cys-207 and Cys-172–Cys-186. 2 N-linked (GlcNAc...) asparagine glycosylation sites follow: Asn-152 and Asn-180. Ser-201 acts as the Charge relay system in catalysis.

The protein belongs to the peptidase S1 family. Granzyme subfamily. As to expression, duodenum, lung and spleen.

This enzyme is necessary for target cell lysis in cell-mediated immune responses. In Rattus norvegicus (Rat), this protein is Granzyme-like protein 2.